A 222-amino-acid chain; its full sequence is ATP synthase F(0) complex subunit a (222 aa).

The next 6 membrane-spanning stretches (helical) occupy residues 7–27, 64–84, 93–113, 132–152, 160–180, and 185–205; these read AFFDVPVGTMMLAIAFPAILL, WSLMLITLTLFIGLTNLLGLL, QLTVNLSMAIPLWTGTVILGF, FLIPMIIIIETISLLIRPVTL, ITAGHLLIHLTGTAALTLLSI, and ITVTFITVVVLTILELAVALI.

Belongs to the ATPase A chain family. As to quaternary structure, component of the ATP synthase complex composed at least of ATP5F1A/subunit alpha, ATP5F1B/subunit beta, ATP5MC1/subunit c (homooctomer), MT-ATP6/subunit a, MT-ATP8/subunit 8, ATP5ME/subunit e, ATP5MF/subunit f, ATP5MG/subunit g, ATP5MK/subunit k, ATP5MJ/subunit j, ATP5F1C/subunit gamma, ATP5F1D/subunit delta, ATP5F1E/subunit epsilon, ATP5PF/subunit F6, ATP5PB/subunit b, ATP5PD/subunit d, ATP5PO/subunit OSCP. ATP synthase complex consists of a soluble F(1) head domain (subunits alpha(3) and beta(3)) - the catalytic core - and a membrane F(0) domain - the membrane proton channel (subunits c, a, 8, e, f, g, k and j). These two domains are linked by a central stalk (subunits gamma, delta, and epsilon) rotating inside the F1 region and a stationary peripheral stalk (subunits F6, b, d, and OSCP). Interacts with DNAJC30; interaction is direct.

The protein resides in the mitochondrion inner membrane. It carries out the reaction H(+)(in) = H(+)(out). Subunit a, of the mitochondrial membrane ATP synthase complex (F(1)F(0) ATP synthase or Complex V) that produces ATP from ADP in the presence of a proton gradient across the membrane which is generated by electron transport complexes of the respiratory chain. ATP synthase complex consist of a soluble F(1) head domain - the catalytic core - and a membrane F(1) domain - the membrane proton channel. These two domains are linked by a central stalk rotating inside the F(1) region and a stationary peripheral stalk. During catalysis, ATP synthesis in the catalytic domain of F(1) is coupled via a rotary mechanism of the central stalk subunits to proton translocation. With the subunit c (ATP5MC1), forms the proton-conducting channel in the F(0) domain, that contains two crucial half-channels (inlet and outlet) that facilitate proton movement from the mitochondrial intermembrane space (IMS) into the matrix. Protons are taken up via the inlet half-channel and released through the outlet half-channel, following a Grotthuss mechanism. This is ATP synthase F(0) complex subunit a from Mammuthus primigenius (Siberian woolly mammoth).